Consider the following 2076-residue polypeptide: Protein Ycf2 (2076 aa).

Gly-1458–Ser-1465 serves as a coordination point for ATP.

Belongs to the Ycf2 family.

It localises to the plastid. The protein localises to the chloroplast stroma. Its function is as follows. Probable ATPase of unknown function. Its presence in a non-photosynthetic plant (Epifagus virginiana) and experiments in tobacco indicate that it has an essential function which is probably not related to photosynthesis. In Acorus calamus (Sweet flag), this protein is Protein Ycf2.